The following is a 106-amino-acid chain: Nucleoid-associated protein PD_1058 (106 aa).

It belongs to the YbaB/EbfC family. Homodimer.

It localises to the cytoplasm. It is found in the nucleoid. In terms of biological role, binds to DNA and alters its conformation. May be involved in regulation of gene expression, nucleoid organization and DNA protection. The chain is Nucleoid-associated protein PD_1058 from Xylella fastidiosa (strain Temecula1 / ATCC 700964).